A 252-amino-acid polypeptide reads, in one-letter code: Origin recognition complex subunit 6 (252 aa).

Thr195 bears the Phosphothreonine mark. Residue Lys210 forms a Glycyl lysine isopeptide (Lys-Gly) (interchain with G-Cter in SUMO2) linkage. Phosphothreonine is present on Thr229.

It belongs to the ORC6 family. In terms of assembly, component of ORC, a complex composed of at least 6 subunits: ORC1, ORC2, ORC3, ORC4, ORC5 and ORC6. ORC is regulated in a cell-cycle dependent manner. It is sequentially assembled at the exit from anaphase of mitosis and disassembled as cells enter S phase. Interacts with DBF4.

Its subcellular location is the nucleus. Functionally, component of the origin recognition complex (ORC) that binds origins of replication. DNA-binding is ATP-dependent. The specific DNA sequences that define origins of replication have not been identified yet. ORC is required to assemble the pre-replication complex necessary to initiate DNA replication. This is Origin recognition complex subunit 6 (ORC6) from Bos taurus (Bovine).